The primary structure comprises 191 residues: Crossover junction endodeoxyribonuclease RuvC (191 aa).

Active-site residues include D7, E67, and D141. Mg(2+)-binding residues include D7, E67, and D141.

This sequence belongs to the RuvC family. In terms of assembly, homodimer which binds Holliday junction (HJ) DNA. The HJ becomes 2-fold symmetrical on binding to RuvC with unstacked arms; it has a different conformation from HJ DNA in complex with RuvA. In the full resolvosome a probable DNA-RuvA(4)-RuvB(12)-RuvC(2) complex forms which resolves the HJ. Mg(2+) serves as cofactor.

Its subcellular location is the cytoplasm. It carries out the reaction Endonucleolytic cleavage at a junction such as a reciprocal single-stranded crossover between two homologous DNA duplexes (Holliday junction).. Functionally, the RuvA-RuvB-RuvC complex processes Holliday junction (HJ) DNA during genetic recombination and DNA repair. Endonuclease that resolves HJ intermediates. Cleaves cruciform DNA by making single-stranded nicks across the HJ at symmetrical positions within the homologous arms, yielding a 5'-phosphate and a 3'-hydroxyl group; requires a central core of homology in the junction. The consensus cleavage sequence is 5'-(A/T)TT(C/G)-3'. Cleavage occurs on the 3'-side of the TT dinucleotide at the point of strand exchange. HJ branch migration catalyzed by RuvA-RuvB allows RuvC to scan DNA until it finds its consensus sequence, where it cleaves and resolves the cruciform DNA. This Myxococcus xanthus (strain DK1622) protein is Crossover junction endodeoxyribonuclease RuvC.